Consider the following 595-residue polypeptide: Elongation factor 4 2 (595 aa).

In terms of domain architecture, tr-type G spans 4-187 (SHIRNFAIIA…AIKQRLPAPQ (184 aa)). GTP-binding positions include 16–21 (DHGKST) and 133–136 (NKVD).

The protein belongs to the TRAFAC class translation factor GTPase superfamily. Classic translation factor GTPase family. LepA subfamily.

It is found in the cell membrane. It catalyses the reaction GTP + H2O = GDP + phosphate + H(+). Required for accurate and efficient protein synthesis under certain stress conditions. May act as a fidelity factor of the translation reaction, by catalyzing a one-codon backward translocation of tRNAs on improperly translocated ribosomes. Back-translocation proceeds from a post-translocation (POST) complex to a pre-translocation (PRE) complex, thus giving elongation factor G a second chance to translocate the tRNAs correctly. Binds to ribosomes in a GTP-dependent manner. The polypeptide is Elongation factor 4 2 (Lactiplantibacillus plantarum (strain ATCC BAA-793 / NCIMB 8826 / WCFS1) (Lactobacillus plantarum)).